We begin with the raw amino-acid sequence, 782 residues long: Endonuclease MutS2 (782 aa).

ATP is bound at residue 336–343 (GPNTGGKT). Positions 707 to 782 (LDLRGYRYED…GFGVTVATLK (76 aa)) constitute a Smr domain.

It belongs to the DNA mismatch repair MutS family. MutS2 subfamily. Homodimer. Binds to stalled ribosomes, contacting rRNA.

Endonuclease that is involved in the suppression of homologous recombination and thus may have a key role in the control of bacterial genetic diversity. Functionally, acts as a ribosome collision sensor, splitting the ribosome into its 2 subunits. Detects stalled/collided 70S ribosomes which it binds and splits by an ATP-hydrolysis driven conformational change. Acts upstream of the ribosome quality control system (RQC), a ribosome-associated complex that mediates the extraction of incompletely synthesized nascent chains from stalled ribosomes and their subsequent degradation. Probably generates substrates for RQC. This Staphylococcus aureus (strain MSSA476) protein is Endonuclease MutS2.